The following is a 678-amino-acid chain: DNA ligase (678 aa).

Residues 35–39, 84–85, and glutamate 115 each bind NAD(+); these read DEEYD and SL. Lysine 117 functions as the N6-AMP-lysine intermediate in the catalytic mechanism. Arginine 138, glutamate 172, lysine 288, and lysine 312 together coordinate NAD(+). Positions 406, 409, 425, and 430 each coordinate Zn(2+). Residues 589-678 form the BRCT domain; the sequence is VQSKILSNLT…IKNLRQQKLF (90 aa).

The protein belongs to the NAD-dependent DNA ligase family. LigA subfamily. It depends on Mg(2+) as a cofactor. Requires Mn(2+) as cofactor.

It carries out the reaction NAD(+) + (deoxyribonucleotide)n-3'-hydroxyl + 5'-phospho-(deoxyribonucleotide)m = (deoxyribonucleotide)n+m + AMP + beta-nicotinamide D-nucleotide.. Its function is as follows. DNA ligase that catalyzes the formation of phosphodiester linkages between 5'-phosphoryl and 3'-hydroxyl groups in double-stranded DNA using NAD as a coenzyme and as the energy source for the reaction. It is essential for DNA replication and repair of damaged DNA. The protein is DNA ligase of Pseudothermotoga lettingae (strain ATCC BAA-301 / DSM 14385 / NBRC 107922 / TMO) (Thermotoga lettingae).